A 1029-amino-acid chain; its full sequence is Carbamoyl phosphate synthase large chain (1029 aa).

The tract at residues 1–402 (MPKRTDLQTI…SLQKALRSTE (402 aa)) is carboxyphosphate synthetic domain. 12 residues coordinate ATP: arginine 129, arginine 169, glycine 175, glycine 176, glutamate 208, isoleucine 210, glutamate 215, glycine 241, valine 242, histidine 243, glutamine 285, and glutamate 299. An ATP-grasp 1 domain is found at 133–328 (QAAMKKIGVE…IAKIAALLAV (196 aa)). The Mg(2+) site is built by glutamine 285, glutamate 299, and asparagine 301. Glutamine 285, glutamate 299, and asparagine 301 together coordinate Mn(2+). Residues 403 to 546 (SDVRGAFAEM…YSTYEWEDEV (144 aa)) form an oligomerization domain region. Residues 547-929 (TPTDKPKVVI…AYYRAELGAK (383 aa)) are carbamoyl phosphate synthetic domain. The region spanning 671–863 (NALCERLGLP…LAKYAARIAV (193 aa)) is the ATP-grasp 2 domain. Positions 707, 747, 749, 754, 779, 780, 781, 782, 822, and 834 each coordinate ATP. Glutamine 822, glutamate 834, and asparagine 836 together coordinate Mg(2+). Residues glutamine 822, glutamate 834, and asparagine 836 each coordinate Mn(2+). One can recognise an MGS-like domain in the interval 930–1028 (SNLPLSGTAL…QAWQQREAAA (99 aa)). An allosteric domain region spans residues 930–1029 (SNLPLSGTAL…AWQQREAAAS (100 aa)).

It belongs to the CarB family. As to quaternary structure, composed of two chains; the small (or glutamine) chain promotes the hydrolysis of glutamine to ammonia, which is used by the large (or ammonia) chain to synthesize carbamoyl phosphate. Tetramer of heterodimers (alpha,beta)4. Mg(2+) serves as cofactor. The cofactor is Mn(2+).

The catalysed reaction is hydrogencarbonate + L-glutamine + 2 ATP + H2O = carbamoyl phosphate + L-glutamate + 2 ADP + phosphate + 2 H(+). The enzyme catalyses hydrogencarbonate + NH4(+) + 2 ATP = carbamoyl phosphate + 2 ADP + phosphate + 2 H(+). The protein operates within amino-acid biosynthesis; L-arginine biosynthesis; carbamoyl phosphate from bicarbonate: step 1/1. Its pathway is pyrimidine metabolism; UMP biosynthesis via de novo pathway; (S)-dihydroorotate from bicarbonate: step 1/3. Large subunit of the glutamine-dependent carbamoyl phosphate synthetase (CPSase). CPSase catalyzes the formation of carbamoyl phosphate from the ammonia moiety of glutamine, carbonate, and phosphate donated by ATP, constituting the first step of 2 biosynthetic pathways, one leading to arginine and/or urea and the other to pyrimidine nucleotides. The large subunit (synthetase) binds the substrates ammonia (free or transferred from glutamine from the small subunit), hydrogencarbonate and ATP and carries out an ATP-coupled ligase reaction, activating hydrogencarbonate by forming carboxy phosphate which reacts with ammonia to form carbamoyl phosphate. The polypeptide is Carbamoyl phosphate synthase large chain (Deinococcus geothermalis (strain DSM 11300 / CIP 105573 / AG-3a)).